Consider the following 133-residue polypeptide: Large ribosomal subunit protein uL22c (133 aa).

Belongs to the universal ribosomal protein uL22 family. As to quaternary structure, part of the 50S ribosomal subunit.

The protein localises to the plastid. It is found in the chloroplast. Its function is as follows. This protein binds specifically to 23S rRNA. Functionally, the globular domain of the protein is located near the polypeptide exit tunnel on the outside of the subunit, while an extended beta-hairpin is found that lines the wall of the exit tunnel in the center of the 70S ribosome. This Manihot esculenta (Cassava) protein is Large ribosomal subunit protein uL22c (rpl22).